The chain runs to 310 residues: Proline iminopeptidase (310 aa).

Residues 33 to 290 form the AB hydrolase-1 domain; it reads PVIFLHGGPG…RVVQAGHCAF (258 aa). Catalysis depends on serine 107, which acts as the Nucleophile. Residue aspartate 260 is part of the active site. The Proton donor role is filled by histidine 287.

It belongs to the peptidase S33 family.

Its subcellular location is the cytoplasm. The catalysed reaction is Release of N-terminal proline from a peptide.. Its function is as follows. Hydrolyzes peptides having the structure Pro-Y-Z to yield free proline. Also hydrolyzes the dipeptide Pro-Gly. This Neisseria gonorrhoeae protein is Proline iminopeptidase (pip).